A 66-amino-acid chain; its full sequence is UPF0337 protein pc0632 (66 aa).

This sequence belongs to the UPF0337 (CsbD) family.

This is UPF0337 protein pc0632 from Protochlamydia amoebophila (strain UWE25).